The primary structure comprises 118 residues: MLLKSTTRHIRLYTAEIKNSELVPSDNVLTLDVDPDNEFNWGEDSLQKVYRKFDELVESYSGQDLTDYNLRRIGSDLEHFIRSLLQKGDISYNLQSRVLNYSMGLPKVESPETEGKYR.

It belongs to the complex I NdhM subunit family. As to quaternary structure, NDH-1 can be composed of about 15 different subunits; different subcomplexes with different compositions have been identified which probably have different functions.

It is found in the cellular thylakoid membrane. The catalysed reaction is a plastoquinone + NADH + (n+1) H(+)(in) = a plastoquinol + NAD(+) + n H(+)(out). It carries out the reaction a plastoquinone + NADPH + (n+1) H(+)(in) = a plastoquinol + NADP(+) + n H(+)(out). Functionally, NDH-1 shuttles electrons from an unknown electron donor, via FMN and iron-sulfur (Fe-S) centers, to quinones in the respiratory and/or the photosynthetic chain. The immediate electron acceptor for the enzyme in this species is believed to be plastoquinone. Couples the redox reaction to proton translocation, and thus conserves the redox energy in a proton gradient. Cyanobacterial NDH-1 also plays a role in inorganic carbon-concentration. In Rippkaea orientalis (strain PCC 8801 / RF-1) (Cyanothece sp. (strain PCC 8801)), this protein is NAD(P)H-quinone oxidoreductase subunit M.